A 729-amino-acid chain; its full sequence is DNA topoisomerase 3 (729 aa).

Residues Lys-3–Thr-136 form the Toprim domain. Mg(2+) is bound by residues Glu-9 and Asp-105. A Topo IA-type catalytic domain is found at Tyr-153 to Val-594. An interaction with DNA region spans residues Asn-187–Gln-192. The active-site O-(5'-phospho-DNA)-tyrosine intermediate is the Tyr-310. A compositionally biased stretch (basic and acidic residues) spans Glu-686 to Glu-713. A disordered region spans residues Glu-686 to Pro-718.

It belongs to the type IA topoisomerase family. Mg(2+) serves as cofactor.

It catalyses the reaction ATP-independent breakage of single-stranded DNA, followed by passage and rejoining.. Releases the supercoiling and torsional tension of DNA, which is introduced during the DNA replication and transcription, by transiently cleaving and rejoining one strand of the DNA duplex. Introduces a single-strand break via transesterification at a target site in duplex DNA. The scissile phosphodiester is attacked by the catalytic tyrosine of the enzyme, resulting in the formation of a DNA-(5'-phosphotyrosyl)-enzyme intermediate and the expulsion of a 3'-OH DNA strand. The free DNA strand then undergoes passage around the unbroken strand, thus removing DNA supercoils. Finally, in the religation step, the DNA 3'-OH attacks the covalent intermediate to expel the active-site tyrosine and restore the DNA phosphodiester backbone. The sequence is that of DNA topoisomerase 3 from Bacillus thuringiensis subsp. konkukian (strain 97-27).